We begin with the raw amino-acid sequence, 426 residues long: Histidine--tRNA ligase (426 aa).

The protein belongs to the class-II aminoacyl-tRNA synthetase family. As to quaternary structure, homodimer.

It is found in the cytoplasm. It carries out the reaction tRNA(His) + L-histidine + ATP = L-histidyl-tRNA(His) + AMP + diphosphate + H(+). The chain is Histidine--tRNA ligase from Prochlorococcus marinus (strain MIT 9301).